We begin with the raw amino-acid sequence, 301 residues long: Protoheme IX farnesyltransferase (301 aa).

The next 8 membrane-spanning stretches (helical) occupy residues 25-45 (VTQLAVFCAVIGMFLSTPGMV), 47-67 (WTPLIGGTVGIWLLAGAAFAI), 97-117 (ILLFSAVLGGLGMWTLYTFAN), 119-139 (LTMWLTLATFVGYAVIYTLLL), 147-167 (IVIGGASGAMPPALGWAAVTG), 173-193 (AWILVLIIFVWTPPHFWALAL), 235-255 (FISGMSGVVYLAAAVLLGALF), and 279-299 (IVYLSLLFAALLIDHYARVLI).

It belongs to the UbiA prenyltransferase family. Protoheme IX farnesyltransferase subfamily.

It is found in the cell inner membrane. The catalysed reaction is heme b + (2E,6E)-farnesyl diphosphate + H2O = Fe(II)-heme o + diphosphate. Its pathway is porphyrin-containing compound metabolism; heme O biosynthesis; heme O from protoheme: step 1/1. Converts heme B (protoheme IX) to heme O by substitution of the vinyl group on carbon 2 of heme B porphyrin ring with a hydroxyethyl farnesyl side group. In Paraburkholderia xenovorans (strain LB400), this protein is Protoheme IX farnesyltransferase.